Consider the following 314-residue polypeptide: Melanoma-associated antigen 6 (314 aa).

The segment covering Met-1–Gly-20 has biased composition (basic and acidic residues). The interval Met-1 to Pro-99 is disordered. Residues Glu-21–Thr-44 are compositionally biased toward low complexity. A compositionally biased stretch (polar residues) spans Pro-65 to Ser-87. One can recognise an MAGE domain in the interval Leu-109–Ala-308.

As to quaternary structure, interacts with TRIM28. Ubiquitinated by the DCX(DCAF12) complex specifically recognizes the diglutamate (Glu-Glu) at the C-terminus, leading to its degradation. In terms of tissue distribution, expressed in many tumors of several types, such as melanoma, head and neck squamous cell carcinoma, lung carcinoma and breast carcinoma, but not in normal tissues except for testes.

Its function is as follows. Activator of ubiquitin ligase activity of RING-type zinc finger-containing E3 ubiquitin-protein ligases that acts as a repressor of autophagy. May enhance ubiquitin ligase activity of TRIM28 and stimulate p53/TP53 ubiquitination by TRIM28. Proposed to act through recruitment and/or stabilization of the Ubl-conjugating enzyme (E2) at the E3:substrate complex. May play a role in tumor transformation or aspects of tumor progression. In vitro promotes cell viability in melanoma cell lines. In Homo sapiens (Human), this protein is Melanoma-associated antigen 6.